Here is a 295-residue protein sequence, read N- to C-terminus: Non-selective voltage-gated ion channel VDAC2 (295 aa).

Residues lysine 24 and lysine 32 each coordinate ATP. Residue lysine 32 is modified to N6-acetyllysine; alternate. Lysine 32 is modified (N6-succinyllysine; alternate). Lysine 32 is covalently cross-linked (Glycyl lysine isopeptide (Lys-Gly) (interchain with G-Cter in ubiquitin); alternate). 2 beta stranded membrane passes run 38 to 47 (LVKLDVKTKS) and 51 to 59 (VEFSTSGSS). Residue lysine 65 forms a Glycyl lysine isopeptide (Lys-Gly) (interchain with G-Cter in ubiquitin) linkage. The chain crosses the membrane as a beta stranded span at residues 66 to 76 (VSGTLETKYKW). Tyrosine 79 is modified (phosphotyrosine). The next 3 membrane-spanning stretches (beta stranded) occupy residues 81-88 (LTFTEKWN), 92-101 (TLGTEIAIED), and 107-116 (LKLTFDTTFS). At threonine 119 the chain carries Phosphothreonine. At lysine 121 the chain carries N6-acetyllysine; alternate. Lysine 121 is covalently cross-linked (Glycyl lysine isopeptide (Lys-Gly) (interchain with G-Cter in ubiquitin); alternate). Residue lysine 122 forms a Glycyl lysine isopeptide (Lys-Gly) (interchain with G-Cter in ubiquitin) linkage. A run of 4 beta stranded transmembrane segments spans residues 123-132 (SGKIKSAYKR), 135-142 (INLGCDVD), 149-157 (AIHGSAVFG), and 162-170 (LAGYQMTFD). Lysine 173 participates in a covalent cross-link: Glycyl lysine isopeptide (Lys-Gly) (interchain with G-Cter in ubiquitin). Beta stranded transmembrane passes span 175 to 187 (KLTR…GYRT), 190 to 197 (FQLHTNVN), 201 to 210 (EFGGSIYQKV), 214 to 223 (FDTSVNLAWT), 230 to 239 (RFGIAAKYQL), and 243 to 250 (ASISAKVN). At tyrosine 237 the chain carries Phosphotyrosine. Serine 252 carries the phosphoserine modification. NAD(+) is bound by residues 254–256 (LIG) and 272–276 (SALVD). Transmembrane regions (beta stranded) follow at residues 254–263 (LIGVGYTQTL) and 266–275 (GVKLTLSALV). At lysine 278 the chain carries N6-acetyllysine; alternate. Lysine 278 participates in a covalent cross-link: Glycyl lysine isopeptide (Lys-Gly) (interchain with G-Cter in ubiquitin); alternate. A beta stranded membrane pass occupies residues 285-294 (HKLGLALELE).

The protein belongs to the eukaryotic mitochondrial porin family. In terms of assembly, monomer, homodimer and higher order oligomers; formation of higher order structures is necessary for scramblase activity. Interacts with ARMC12 in a TBC1D21-dependent manner. Interacts with KLC3. Interacts with SPATA33. Interacts with PPP3CC in a SPATA33-dependent manner. Post-translationally, ubiquitinated by PRKN during mitophagy, leading to its degradation and enhancement of mitophagy. Deubiquitinated by USP30. Highly expressed in heart, kidney, brain and ascitic tumor with very low levels in liver. Expressed in the head region of epididymal sperm.

It is found in the mitochondrion outer membrane. The protein resides in the membrane. The enzyme catalyses chloride(in) = chloride(out). It carries out the reaction K(+)(in) = K(+)(out). The catalysed reaction is a 1,2-diacyl-sn-glycero-3-phospho-L-serine(in) = a 1,2-diacyl-sn-glycero-3-phospho-L-serine(out). It catalyses the reaction a 1,2-diacyl-sn-glycero-3-phosphocholine(in) = a 1,2-diacyl-sn-glycero-3-phosphocholine(out). The enzyme catalyses a 1,2-diacyl-sn-glycero-3-phospho-(1D-myo-inositol)(in) = a 1,2-diacyl-sn-glycero-3-phospho-(1D-myo-inositol)(out). Its function is as follows. Non-selective voltage-gated ion channel that mediates the transport of anions and cations through the mitochondrion outer membrane and plasma membrane. The channel adopts an open conformation at zero mV and a closed conformation at both positive and negative potentials. There are two populations of channels; the main that functions in a lower open-state conductance with lower ion selectivity, that switch, in a voltage-dependent manner, from the open to a low-conducting 'closed' state and the other that has a normal ion selectivity in the typical high conductance, 'open' state. Binds various lipids, including the sphingolipid ceramide, the phospholipid phosphatidylcholine, and the sterols cholesterol and oxysterol. Binding of ceramide promotes the mitochondrial outer membrane permeabilization (MOMP) apoptotic pathway. In terms of biological role, catalyzes the scrambling of phospholipids across the outer mitochondrial membrane; the mechanism is unrelated to channel activity and is capable of translocating both anionic and zwitterionic phospholipids. The protein is Non-selective voltage-gated ion channel VDAC2 of Rattus norvegicus (Rat).